Here is a 312-residue protein sequence, read N- to C-terminus: Uracil-DNA glycosylase (312 aa).

Residues 1-11 (MSSACDHETEA) are compositionally biased toward basic and acidic residues. The interval 1–61 (MSSACDHETE…PPKRRRPCGL (61 aa)) is disordered. Residues 22 to 33 (EENGSNSSTPTS) are compositionally biased toward polar residues. Aspartate 155 functions as the Proton acceptor in the catalytic mechanism.

This sequence belongs to the uracil-DNA glycosylase (UDG) superfamily. UNG family.

The protein resides in the host nucleus. The enzyme catalyses Hydrolyzes single-stranded DNA or mismatched double-stranded DNA and polynucleotides, releasing free uracil.. Its function is as follows. Excises uracil residues from the DNA which can arise as a result of misincorporation of dUMP residues by DNA polymerase or deamination of cytosines. Therefore may reduce deleterious uracil incorporation into the viral genome, particularly in terminally differentiated cells which lack DNA repair enzymes. The sequence is that of Uracil-DNA glycosylase (61) from Equine herpesvirus 1 (strain V592) (EHV-1).